Consider the following 409-residue polypeptide: MALGTRNMNMNLHGESKHTFNNENVSARLGGKSIAVQKPAQRAALGNISNVVRTAQAGSKKVVKKDTRQKAMTKTKATSSLHAVVGLPVEDLPTEMRSTSPDVLDAMEVDQAIEAFSQQLIALQVEDIDKDDGDNPQLCSEYAKDIYLYLRRLEVEMMVPANYLDRQETQITGRMRLILVDWLVQVHLRFHLLQETLFLTVQLIDRFLAEHSVSKGKLQLVGVTAMFIASKYEEMYPPEINDFVYITDNAYTKAQIRQMEIAMLKGLKYKLGKPLCLHFLRRNSKAAGVDAQKHTLAKYLMEITLPEYSMVQYSPSEIAAAAIYLSMTLLDPETHSSWCPKMTHYSMYSEDHLRPIVQKIVQILLRDDSASQKYSAVKTKYGSSKFMKISGIAQLDSSLLKQIAQGSNE.

This sequence belongs to the cyclin family. Cyclin AB subfamily. As to quaternary structure, interacts with the CDK1 protein kinase to form a serine/threonine kinase holoenzyme complex also known as maturation promoting factor (MPF). The cyclin subunit imparts substrate specificity to the complex.

In terms of biological role, essential for the control of the cell cycle at the G2/M (mitosis) transition. The polypeptide is G2/mitotic-specific cyclin-B (Arbacia punctulata (Punctuate sea urchin)).